The chain runs to 229 residues: Large ribosomal subunit protein uL1 (229 aa).

It belongs to the universal ribosomal protein uL1 family. Part of the 50S ribosomal subunit.

Functionally, binds directly to 23S rRNA. The L1 stalk is quite mobile in the ribosome, and is involved in E site tRNA release. Protein L1 is also a translational repressor protein, it controls the translation of the L11 operon by binding to its mRNA. The polypeptide is Large ribosomal subunit protein uL1 (Streptococcus thermophilus (strain CNRZ 1066)).